We begin with the raw amino-acid sequence, 121 residues long: Basic phospholipase A2 VRV-PL-V (121 aa).

Intrachain disulfides connect C26-C115, C28-C44, C43-C95, C49-C121, C50-C88, C57-C81, and C75-C86. Ca(2+)-binding residues include Y27, G29, and G31. H47 is a catalytic residue. D48 lines the Ca(2+) pocket. Residue D89 is part of the active site.

This sequence belongs to the phospholipase A2 family. Group II subfamily. D49 sub-subfamily. As to quaternary structure, monomer. The cofactor is Ca(2+). In terms of tissue distribution, expressed by the venom gland.

The protein resides in the secreted. The enzyme catalyses a 1,2-diacyl-sn-glycero-3-phosphocholine + H2O = a 1-acyl-sn-glycero-3-phosphocholine + a fatty acid + H(+). Its function is as follows. Snake venom phospholipase A2 (PLA2) that has a low enzymatic activity. PLA2 catalyzes the calcium-dependent hydrolysis of the 2-acyl groups in 3-sn-phosphoglycerides. In Daboia russelii (Russel's viper), this protein is Basic phospholipase A2 VRV-PL-V.